We begin with the raw amino-acid sequence, 311 residues long: MAGPLWRAAVFIQRHRTSLLVGSCVGLFGVQISFHLFPDPIVQWLYQYWPQGQPAPLSPQLRSLFQEVLKDIGVPSGHCYKPFTAFTFQPVSAGFPQLPAGAVVGIPAIFLGGLVTNIDHTVVIHGQKVDWQSPAGTRLRDALTLSHDAQKFALAKEVVYLESGMAALQTLPAPVCLAGTWAISVGAKHALGLYGGPMSLRAAFNLVAIVVGYVAYAFSKDSLTVALEGWLDHRTASLSAAYVRGGVEFYEKILSGNLALRSLLGRQGEKLYTPSGNIVPRHWFRINHLPYTTRRDSLLQMWRAKVSPGHF.

Residues 1–17 (MAGPLWRAAVFIQRHRT) lie on the Mitochondrial matrix side of the membrane. The helical transmembrane segment at 18–38 (SLLVGSCVGLFGVQISFHLFP) threads the bilayer. Over 39-164 (DPIVQWLYQY…AKEVVYLESG (126 aa)) the chain is Mitochondrial intermembrane. A helical membrane pass occupies residues 165–185 (MAALQTLPAPVCLAGTWAISV). Residues 186–197 (GAKHALGLYGGP) are Mitochondrial matrix-facing. A helical membrane pass occupies residues 198-218 (MSLRAAFNLVAIVVGYVAYAF). Over 219-311 (SKDSLTVALE…WRAKVSPGHF (93 aa)) the chain is Mitochondrial intermembrane.

This sequence belongs to the TMEM177 family. As to quaternary structure, found in a complex with COX20, COA6, MT-CO2/COX2, COX18, SCO1 and SCO2. Interacts with COX20. Interacts with COX1, MT-CO2/COX2, SCO1 and SCO2 in a COX20-dependent manner.

Its subcellular location is the mitochondrion inner membrane. In terms of biological role, plays a role in the early steps of cytochrome c oxidase subunit II (MT-CO2/COX2) maturation and is required for the stabilization of COX20 and the newly synthesized MT-CO2/COX2 protein. This is Transmembrane protein 177 (Tmem177) from Rattus norvegicus (Rat).